We begin with the raw amino-acid sequence, 417 residues long: UDP-N-acetylglucosamine 1-carboxyvinyltransferase (417 aa).

K22–N23 is a phosphoenolpyruvate binding site. R93 lines the UDP-N-acetyl-alpha-D-glucosamine pocket. Catalysis depends on C117, which acts as the Proton donor. C117 carries the post-translational modification 2-(S-cysteinyl)pyruvic acid O-phosphothioketal. UDP-N-acetyl-alpha-D-glucosamine contacts are provided by residues R122–L126, D305, and I327.

Belongs to the EPSP synthase family. MurA subfamily.

Its subcellular location is the cytoplasm. It catalyses the reaction phosphoenolpyruvate + UDP-N-acetyl-alpha-D-glucosamine = UDP-N-acetyl-3-O-(1-carboxyvinyl)-alpha-D-glucosamine + phosphate. The protein operates within cell wall biogenesis; peptidoglycan biosynthesis. In terms of biological role, cell wall formation. Adds enolpyruvyl to UDP-N-acetylglucosamine. The sequence is that of UDP-N-acetylglucosamine 1-carboxyvinyltransferase from Thiobacillus denitrificans (strain ATCC 25259 / T1).